Consider the following 196-residue polypeptide: ATP-dependent Clp protease proteolytic subunit (196 aa).

Ser98 (nucleophile) is an active-site residue. His123 is a catalytic residue.

It belongs to the peptidase S14 family. Fourteen ClpP subunits assemble into 2 heptameric rings which stack back to back to give a disk-like structure with a central cavity, resembling the structure of eukaryotic proteasomes.

The protein resides in the cytoplasm. The enzyme catalyses Hydrolysis of proteins to small peptides in the presence of ATP and magnesium. alpha-casein is the usual test substrate. In the absence of ATP, only oligopeptides shorter than five residues are hydrolyzed (such as succinyl-Leu-Tyr-|-NHMec, and Leu-Tyr-Leu-|-Tyr-Trp, in which cleavage of the -Tyr-|-Leu- and -Tyr-|-Trp bonds also occurs).. In terms of biological role, cleaves peptides in various proteins in a process that requires ATP hydrolysis. Has a chymotrypsin-like activity. Plays a major role in the degradation of misfolded proteins. This chain is ATP-dependent Clp protease proteolytic subunit, found in Anoxybacillus flavithermus (strain DSM 21510 / WK1).